The following is a 119-amino-acid chain: Holo-[acyl-carrier-protein] synthase (119 aa).

2 residues coordinate Mg(2+): D8 and E58.

The protein belongs to the P-Pant transferase superfamily. AcpS family. Mg(2+) is required as a cofactor.

Its subcellular location is the cytoplasm. It carries out the reaction apo-[ACP] + CoA = holo-[ACP] + adenosine 3',5'-bisphosphate + H(+). Its function is as follows. Transfers the 4'-phosphopantetheine moiety from coenzyme A to a Ser of acyl-carrier-protein. The chain is Holo-[acyl-carrier-protein] synthase from Bacillus cereus (strain ATCC 10987 / NRS 248).